A 424-amino-acid polypeptide reads, in one-letter code: Probable serine/threonine-protein kinase PBL15 (424 aa).

Positions 99–380 constitute a Protein kinase domain; the sequence is FSGNYLLGEG…AVVEALESLI (282 aa). ATP contacts are provided by residues 105–113 and K134; that span reads LGEGGFGKV. Y179 carries the post-translational modification Phosphotyrosine. D229 acts as the Proton acceptor in catalysis. Residue S233 is modified to Phosphoserine. Phosphothreonine occurs at positions 264 and 269. Residue Y277 is modified to Phosphotyrosine. The tract at residues 390 to 424 is disordered; that stretch reads GHWPLSPKSQGGKVSPKVRGDHRSGRKSAPGSLRS.

This sequence belongs to the protein kinase superfamily. Ser/Thr protein kinase family. In terms of assembly, interacts with the Xanthomonas campestris effector XopAC/AvrAC.

It localises to the cell membrane. It catalyses the reaction L-seryl-[protein] + ATP = O-phospho-L-seryl-[protein] + ADP + H(+). It carries out the reaction L-threonyl-[protein] + ATP = O-phospho-L-threonyl-[protein] + ADP + H(+). May be involved in plant defense signaling. This Arabidopsis thaliana (Mouse-ear cress) protein is Probable serine/threonine-protein kinase PBL15.